The primary structure comprises 215 residues: Guanylate kinase (215 aa).

The region spanning 9–187 (GTLYIVSAPS…ALDELSCLVH (179 aa)) is the Guanylate kinase-like domain. 16 to 23 (APSGAGKT) serves as a coordination point for ATP.

The protein belongs to the guanylate kinase family.

The protein localises to the cytoplasm. The enzyme catalyses GMP + ATP = GDP + ADP. Functionally, essential for recycling GMP and indirectly, cGMP. This chain is Guanylate kinase, found in Chromohalobacter salexigens (strain ATCC BAA-138 / DSM 3043 / CIP 106854 / NCIMB 13768 / 1H11).